A 260-amino-acid chain; its full sequence is MRLALGLSYRGGAYRGWQSQPDGLTVQDRVEEALARFADRPVRTVCAGRTDAGVHALNQVVHLDTEIEREPFSWVRGTNRYLPPDIAVQWCRPVDAAFHARNSARGRRYAYLLLESPVRPAIEAGAVGWVFRPLDATPMREAAAHLIGEHDFSAFRSAECQAASPVKNLRRIEIVRCGAYWRFEFEASAFLHHMVRNLMGCLLAVGQGVRAPQWLAEVLAAGDRRRAAPTFAPDGLYFLGPQYDANLDLPERTPAFDWLP.

The active-site Nucleophile is D51. Y109 is a binding site for substrate.

Belongs to the tRNA pseudouridine synthase TruA family. In terms of assembly, homodimer.

The enzyme catalyses uridine(38/39/40) in tRNA = pseudouridine(38/39/40) in tRNA. Functionally, formation of pseudouridine at positions 38, 39 and 40 in the anticodon stem and loop of transfer RNAs. In Methylibium petroleiphilum (strain ATCC BAA-1232 / LMG 22953 / PM1), this protein is tRNA pseudouridine synthase A.